Consider the following 421-residue polypeptide: Isocitrate dehydrogenase [NADP], mitochondrial (421 aa).

The transit peptide at 1–8 (ARAAARHY) directs the protein to the mitochondrion. N6-acetyllysine occurs at positions 14, 17, 36, and 38. K49 and K75 each carry N6-acetyllysine; alternate. N6-succinyllysine; alternate occurs at positions 49 and 75. Residues 84–86 (TIT) and R91 contribute to the NADP(+) site. T86 provides a ligand contact to D-threo-isocitrate. Residues 103–109 (SPNGTIR) and R118 each bind D-threo-isocitrate. K124 carries the post-translational modification N6-acetyllysine. N6-acetyllysine; alternate is present on K135. K135 carries the N6-succinyllysine; alternate modification. R141 serves as a coordination point for D-threo-isocitrate. N6-acetyllysine; alternate occurs at positions 149 and 162. K149 and K162 each carry N6-succinyllysine; alternate. K168 carries the N6-acetyllysine modification. N6-acetyllysine; alternate is present on K225. K225 carries the N6-succinyllysine; alternate modification. An N6-acetyllysine mark is found at K232, K241, K244, and K249. At K251 the chain carries N6-acetyllysine; alternate. K251 is subject to N6-succinyllysine; alternate. Residue D260 participates in Mn(2+) binding. Residue K268 participates in NADP(+) binding. D283 is a binding site for Mn(2+). Residues 318 to 323 (GTVTRH) and N336 contribute to the NADP(+) site. K353 is subject to N6-acetyllysine; alternate. K353 bears the N6-succinyllysine; alternate mark. An N6-acetyllysine mark is found at K369, K382, and K411.

It belongs to the isocitrate and isopropylmalate dehydrogenases family. As to quaternary structure, homodimer. Requires Mg(2+) as cofactor. Mn(2+) is required as a cofactor. Post-translationally, acetylation at Lys-382 dramatically reduces catalytic activity. Deacetylated by SIRT3.

The protein resides in the mitochondrion. It carries out the reaction D-threo-isocitrate + NADP(+) = 2-oxoglutarate + CO2 + NADPH. Plays a role in intermediary metabolism and energy production. It may tightly associate or interact with the pyruvate dehydrogenase complex. This chain is Isocitrate dehydrogenase [NADP], mitochondrial (IDH2), found in Sus scrofa (Pig).